The primary structure comprises 225 residues: Riboflavin kinase (225 aa).

The unknown stretch occupies residues 1–89 (MPDIKYLKKL…SRIFSPDLDI (89 aa)). The segment at 90–225 (LELEGKVLKG…LKKQGTENQK (136 aa)) is riboflavin kinase. 99–104 (GLGEGQ) contributes to the CDP binding site. Residues Thr-128 and Asn-130 each coordinate Mg(2+). FMN-binding residues include Thr-185 and Glu-193. Position 198 to 201 (198 to 201 (IKLR)) interacts with CDP.

It belongs to the archaeal riboflavin kinase family. The cofactor is Mg(2+).

The catalysed reaction is riboflavin + CTP = CDP + FMN + H(+). The protein operates within cofactor biosynthesis; FMN biosynthesis; FMN from riboflavin (CTP route): step 1/1. Functionally, catalyzes the CTP-dependent phosphorylation of riboflavin (vitamin B2) to form flavin mononucleotide (FMN). The protein is Riboflavin kinase (ribK) of Methanosarcina barkeri (strain Fusaro / DSM 804).